We begin with the raw amino-acid sequence, 463 residues long: Cysteine--tRNA ligase (463 aa).

Cys-27 is a Zn(2+) binding site. Positions 29 to 39 (MTVYDYCHLGH) match the 'HIGH' region motif. 3 residues coordinate Zn(2+): Cys-208, His-233, and Glu-237. The 'KMSKS' region motif lies at 265–269 (KMSKS). Lys-268 lines the ATP pocket.

This sequence belongs to the class-I aminoacyl-tRNA synthetase family. As to quaternary structure, monomer. The cofactor is Zn(2+).

The protein localises to the cytoplasm. The enzyme catalyses tRNA(Cys) + L-cysteine + ATP = L-cysteinyl-tRNA(Cys) + AMP + diphosphate. This Marinobacter nauticus (strain ATCC 700491 / DSM 11845 / VT8) (Marinobacter aquaeolei) protein is Cysteine--tRNA ligase.